We begin with the raw amino-acid sequence, 217 residues long: Phosphatidylserine decarboxylase proenzyme (217 aa).

Ser-187 serves as the catalytic Schiff-base intermediate with substrate; via pyruvic acid. At Ser-187 the chain carries Pyruvic acid (Ser); by autocatalysis.

The protein belongs to the phosphatidylserine decarboxylase family. PSD-A subfamily. As to quaternary structure, heterodimer of a large membrane-associated beta subunit and a small pyruvoyl-containing alpha subunit. Requires pyruvate as cofactor. In terms of processing, is synthesized initially as an inactive proenzyme. Formation of the active enzyme involves a self-maturation process in which the active site pyruvoyl group is generated from an internal serine residue via an autocatalytic post-translational modification. Two non-identical subunits are generated from the proenzyme in this reaction, and the pyruvate is formed at the N-terminus of the alpha chain, which is derived from the carboxyl end of the proenzyme. The post-translation cleavage follows an unusual pathway, termed non-hydrolytic serinolysis, in which the side chain hydroxyl group of the serine supplies its oxygen atom to form the C-terminus of the beta chain, while the remainder of the serine residue undergoes an oxidative deamination to produce ammonia and the pyruvoyl prosthetic group on the alpha chain.

It localises to the cell membrane. It catalyses the reaction a 1,2-diacyl-sn-glycero-3-phospho-L-serine + H(+) = a 1,2-diacyl-sn-glycero-3-phosphoethanolamine + CO2. It participates in phospholipid metabolism; phosphatidylethanolamine biosynthesis; phosphatidylethanolamine from CDP-diacylglycerol: step 2/2. Functionally, catalyzes the formation of phosphatidylethanolamine (PtdEtn) from phosphatidylserine (PtdSer). The polypeptide is Phosphatidylserine decarboxylase proenzyme (Thermobifida fusca (strain YX)).